The following is a 161-amino-acid chain: Small ribosomal subunit protein uS9 (161 aa).

The protein belongs to the universal ribosomal protein uS9 family.

In Rickettsia typhi (strain ATCC VR-144 / Wilmington), this protein is Small ribosomal subunit protein uS9.